The chain runs to 123 residues: Small ribosomal subunit protein uS8 (123 aa).

Belongs to the universal ribosomal protein uS8 family. Part of the 30S ribosomal subunit. Contacts proteins S5 and S12.

One of the primary rRNA binding proteins, it binds directly to 16S rRNA central domain where it helps coordinate assembly of the platform of the 30S subunit. In Carsonella ruddii (strain PV), this protein is Small ribosomal subunit protein uS8 (rpsH).